The following is a 780-amino-acid chain: LPS-assembly protein LptD (780 aa).

A signal peptide spans Met1–Ala24.

The protein belongs to the LptD family. As to quaternary structure, component of the lipopolysaccharide transport and assembly complex. Interacts with LptE and LptA.

The protein resides in the cell outer membrane. Functionally, together with LptE, is involved in the assembly of lipopolysaccharide (LPS) at the surface of the outer membrane. The protein is LPS-assembly protein LptD of Yersinia pestis bv. Antiqua (strain Antiqua).